Here is a 1010-residue protein sequence, read N- to C-terminus: ATP-dependent DNA/RNA helicase DHX36 (1010 aa).

The tract at residues 1 to 54 (MSYDYHQNWGRDGGPRSSGGGYGGSYGGSHGGGHGGNRGSGGGGGGGGGRGGRG) is required for recruitment to cytoplasmic stress granules. The segment at 1–63 (MSYDYHQNWG…GRHPGHLKGR (63 aa)) is disordered. Positions 1 to 107 (MSYDYHQNWG…IVQLLHSVQT (107 aa)) are required for the pre-miR-134 transport. The interval 1–202 (MSYDYHQNWG…KKTDLRYIEM (202 aa)) is necessary for nuclear and nucleolar caps localizations. The span at 16–51 (RSSGGGYGGSYGGSHGGGHGGNRGSGGGGGGGGGRG) shows a compositional bias: gly residues. Positions 56–78 (HPGHLKGREIGLWYAKKQGQKNK) are DSM (DHX36-specific motif). A required for G4-DNA- and G4-RNA-binding region spans residues 56–108 (HPGHLKGREIGLWYAKKQGQKNKEAERQERAVVHMDERREEQIVQLLHSVQTK). 2 recA-like domain regions span residues 109–388 (NDKD…MIHI) and 389–630 (PGFT…DYQL). The Helicase ATP-binding domain maps to 219–389 (VNMIDNHQVT…FGNCPMIHIP (171 aa)). Residue 235–240 (GCGKTT) participates in ATP binding. The interval 267–319 (RRISAISVAERVAAERAESCGNGNSTGYQIRLQSRLPRKQGSILYCTTGIILQ) is necessary for interaction with single-stranded DNA at the 3'-end of the G4-DNA structure. Positions 336–339 (DEIH) match the DEAH box motif. Glutamate 337 and histidine 339 together coordinate Mg(2+). A Helicase C-terminal domain is found at 479-649 (ALIRYIVLEE…ELCLQIKILR (171 aa)). The interval 500 to 559 (WDNISTLHDLLMSQVMFKSDKFIIIPLHSLMPTVNQTQVFKRTPPGVRKIVIATNIAETS) is necessary for interaction with single-stranded DNA at the 3'-end of the G4-DNA structure. The Nuclear localization signal signature appears at 519–530 (DKFIIIPLHSLM). ATP-binding positions include serine 559 and 604–607 (RAGR). The WH domain stretch occupies residues 631–700 (PEILRTPLEE…LGVHLARLPV (70 aa)). 3 necessary for interaction with single-stranded DNA at the 3'-end of the G4-DNA structure regions span residues 640-699 (ELCL…ARLP), 851-862 (NLGKKRKMVKVY), and 872-902 (HPKS…IYLY). Residues 843 to 907 (PKVAKIRLNL…SIYLYDCTEV (65 aa)) form an OB-fold-like subdomains region. Position 949 is an N6-acetyllysine (lysine 949). The residue at position 965 (serine 965) is a Phosphoserine.

In terms of assembly, found in a multi-helicase-TICAM1 complex at least composed of DHX36, DDX1, DDX21 and TICAM1; this complex exists in resting cells with or without dsRNA poly(I:C) ligand stimulation. Interacts (via C-terminus) with TICAM1 (via TIR domain). Interacts (via C-terminus) with DDX21; this interaction serves as bridges to TICAM1. Interacts with TERT; this interaction is dependent on the ability of DHX36 to bind to the G-quadruplex RNA (G4-RNA) structure present in the telomerase RNA template component (TERC). Interacts with DKC1; this interaction is dependent on the ability of DHX36 to bind to the G4-RNA structure present in TERC. Interacts with PARN; this interaction stimulates PARN to enhance uPA mRNA decay. Interacts with EXOSC3; this interaction occurs in a RNase-insensitive manner. Interacts with EXOSC10; this interaction occurs in a RNase-insensitive manner. Interacts with ILF3; this interaction occurs in a RNA-dependent manner. Interacts with ELAVL1; this interaction occurs in an RNA-dependent manner. Interacts with DDX5; this interaction occurs in a RNA-dependent manner. Interacts with DDX17; this interaction occurs in a RNA-dependent manner. Interacts with HDAC1; this interaction occurs in a RNA-dependent manner. Interacts with HDAC3; this interaction occurs in a RNA-dependent manner. Interacts with HDAC4. Interacts with AGO1. Interacts with AGO2. Interacts with ERCC6. Mg(2+) serves as cofactor.

The protein localises to the nucleus. Its subcellular location is the cytoplasm. It localises to the cytosol. It is found in the stress granule. The protein resides in the nucleus speckle. The protein localises to the chromosome. Its subcellular location is the telomere. It localises to the mitochondrion. It is found in the perikaryon. The protein resides in the cell projection. The protein localises to the dendrite. Its subcellular location is the axon. It carries out the reaction ATP + H2O = ADP + phosphate + H(+). With respect to regulation, ATPase activity is enhanced in the presence of homomeric poly(U) RNAs, but not by double-stranded DNA (dsDNA), double-stranded RNA (dsRNA) and tRNA. In terms of biological role, multifunctional ATP-dependent helicase that unwinds G-quadruplex (G4) structures. Plays a role in many biological processes such as genomic integrity, gene expression regulations and as a sensor to initiate antiviral responses. G4 structures correspond to helical structures containing guanine tetrads. Binds with high affinity to and unwinds G4 structures that are formed in nucleic acids (G4-DNA and G4-RNA). Plays a role in genomic integrity. Converts the G4-RNA structure present in telomerase RNA template component (TREC) into a double-stranded RNA to promote P1 helix formation that acts as a template boundary ensuring accurate reverse transcription. Plays a role in transcriptional regulation. Resolves G4-DNA structures in promoters of genes, such as YY1, KIT/c-kit and ALPL and positively regulates their expression. Plays a role in post-transcriptional regulation. Unwinds a G4-RNA structure located in the 3'-UTR polyadenylation site of the pre-mRNA TP53 and stimulates TP53 pre-mRNA 3'-end processing in response to ultraviolet (UV)-induced DNA damage. Binds to the precursor-microRNA-134 (pre-miR-134) terminal loop and regulates its transport into the synapto-dendritic compartment. Involved in the pre-miR-134-dependent inhibition of target gene expression and the control of dendritic spine size. Plays a role in the regulation of cytoplasmic mRNA translation and mRNA stability. Binds to both G4-RNA structures and alternative non-quadruplex-forming sequence within the 3'-UTR of the PITX1 mRNA regulating negatively PITX1 protein expression. Binds to both G4-RNA structure in the 5'-UTR and AU-rich elements (AREs) localized in the 3'-UTR of NKX2-5 mRNA to either stimulate protein translation or induce mRNA decay in an ELAVL1-dependent manner, respectively. Also binds to ARE sequences present in several mRNAs mediating exosome-mediated 3'-5' mRNA degradation. Involved in cytoplasmic urokinase-type plasminogen activator (uPA) mRNA decay. Component of a multi-helicase-TICAM1 complex that acts as a cytoplasmic sensor of viral double-stranded RNA (dsRNA) and plays a role in the activation of a cascade of antiviral responses including the induction of pro-inflammatory cytokines via the adapter molecule TICAM1. Required for the early embryonic development and hematopoiesis. Involved in the regulation of cardioblast differentiation and proliferation during heart development. Involved in spermatogonia differentiation. May play a role in ossification. The chain is ATP-dependent DNA/RNA helicase DHX36 from Bos taurus (Bovine).